Reading from the N-terminus, the 1524-residue chain is Protein dispatched homolog 1 (1524 aa).

Residue Asn59 is glycosylated (N-linked (GlcNAc...) asparagine). Helical transmembrane passes span 190–210 (VVVL…GVLV), 500–520 (LLMD…VMCV), 525–545 (MFIT…SYFL), and 549–569 (VFHF…LVGI). The SSD domain occupies 486–658 (GIEFGIKHSL…VTWLPAVVVL (173 aa)). A glycan (N-linked (GlcNAc...) asparagine) is linked at Asn582. Helical transmembrane passes span 604–624 (AALS…ANYV), 638–658 (GTAI…VVVL), 719–739 (YLWL…VCIN), 988–1008 (MGLS…NIII), 1010–1030 (LYAI…LVLL), 1040–1060 (VTIS…GVAY), 1079–1099 (VGSA…MMMP), and 1107–1127 (QLGT…TFFF).

It belongs to the dispatched family. As to quaternary structure, interacts with SHH via the cholesterol anchor of the dually lipid-modified SHH (ShhNp).

Its subcellular location is the membrane. Functions in hedgehog (Hh) signaling. Regulates the release and extracellular accumulation of cholesterol-modified hedgehog proteins and is hence required for effective production of the Hh signal. Synergizes with SCUBE2 to cause an increase in SHH secretion. The protein is Protein dispatched homolog 1 (DISP1) of Homo sapiens (Human).